The following is a 940-amino-acid chain: Testis-expressed protein 11 (940 aa).

Belongs to the SPO22 family. In terms of assembly, interacts with SYCP2. Interacts with PBXIP1; may prevent interaction between PBXIP1 and ESR2. Interacts with SHOC1. Interacts with REDIC1. In terms of tissue distribution, testis-specific. Not expressed in adult ovaries.

It is found in the chromosome. Regulator of crossing-over during meiosis. Involved in initiation and/or maintenance of chromosome synapsis and formation of crossovers. The chain is Testis-expressed protein 11 (TEX11) from Homo sapiens (Human).